Consider the following 641-residue polypeptide: Calpain-6 (641 aa).

Residues 26 to 343 (LFCDPTFLPE…FHKLNVCRNV (318 aa)) enclose the Calpain catalytic domain. Positions 344-495 (NNPVFGRKEL…IFSEVPVQLR (152 aa)) are domain III. The 124-residue stretch at 498–621 (TLDMPKMSCW…YLRKKGGPTA (124 aa)) folds into the C2 domain.

Belongs to the peptidase C2 family. As to quaternary structure, interacts (via domain III) with microtubules. Interacts (via domain II) with ARHGEF2 (via the N-terminal zinc finger).

The protein localises to the cytoplasm. The protein resides in the perinuclear region. It localises to the cytoskeleton. Its subcellular location is the spindle. In terms of biological role, microtubule-stabilizing protein that may be involved in the regulation of microtubule dynamics and cytoskeletal organization. May act as a regulator of RAC1 activity through interaction with ARHGEF2 to control lamellipodial formation and cell mobility. Does not seem to have protease activity as it has lost the active site residues. This chain is Calpain-6 (Capn6), found in Rattus norvegicus (Rat).